Reading from the N-terminus, the 178-residue chain is ATP synthase subunit delta (178 aa).

Belongs to the ATPase delta chain family. F-type ATPases have 2 components, F(1) - the catalytic core - and F(0) - the membrane proton channel. F(1) has five subunits: alpha(3), beta(3), gamma(1), delta(1), epsilon(1). F(0) has three main subunits: a(1), b(2) and c(10-14). The alpha and beta chains form an alternating ring which encloses part of the gamma chain. F(1) is attached to F(0) by a central stalk formed by the gamma and epsilon chains, while a peripheral stalk is formed by the delta and b chains.

The protein localises to the cell membrane. Its function is as follows. F(1)F(0) ATP synthase produces ATP from ADP in the presence of a proton or sodium gradient. F-type ATPases consist of two structural domains, F(1) containing the extramembraneous catalytic core and F(0) containing the membrane proton channel, linked together by a central stalk and a peripheral stalk. During catalysis, ATP synthesis in the catalytic domain of F(1) is coupled via a rotary mechanism of the central stalk subunits to proton translocation. Functionally, this protein is part of the stalk that links CF(0) to CF(1). It either transmits conformational changes from CF(0) to CF(1) or is implicated in proton conduction. The polypeptide is ATP synthase subunit delta (Acetivibrio thermocellus (strain ATCC 27405 / DSM 1237 / JCM 9322 / NBRC 103400 / NCIMB 10682 / NRRL B-4536 / VPI 7372) (Clostridium thermocellum)).